The following is a 1399-amino-acid chain: DNA-directed RNA polymerase subunit beta' (1399 aa).

4 residues coordinate Zn(2+): cysteine 70, cysteine 72, cysteine 85, and cysteine 88. The Mg(2+) site is built by aspartate 460, aspartate 462, and aspartate 464. The Zn(2+) site is built by cysteine 814, cysteine 888, cysteine 895, and cysteine 898. The tract at residues 1367 to 1399 is disordered; that stretch reads SERKRQRDLGKPQRVSASEAEAALTEALNSSGN. The segment covering 1382–1399 has biased composition (low complexity); the sequence is SASEAEAALTEALNSSGN.

It belongs to the RNA polymerase beta' chain family. As to quaternary structure, the RNAP catalytic core consists of 2 alpha, 1 beta, 1 beta' and 1 omega subunit. When a sigma factor is associated with the core the holoenzyme is formed, which can initiate transcription. Mg(2+) is required as a cofactor. The cofactor is Zn(2+).

It carries out the reaction RNA(n) + a ribonucleoside 5'-triphosphate = RNA(n+1) + diphosphate. In terms of biological role, DNA-dependent RNA polymerase catalyzes the transcription of DNA into RNA using the four ribonucleoside triphosphates as substrates. This chain is DNA-directed RNA polymerase subunit beta', found in Pseudomonas aeruginosa (strain UCBPP-PA14).